We begin with the raw amino-acid sequence, 333 residues long: D-alanine--D-alanine ligase (333 aa).

Residues 124–329 (KMWFSALGIR…FAQYLSGNIM (206 aa)) enclose the ATP-grasp domain. Residue 154–209 (ALEKWGSIFIKAASQGSSVGCYRVDNKEQLANSLEEAFKYSPYVVVEKTINARELE) participates in ATP binding. Residues Asp-283, Glu-296, and Asn-298 each coordinate Mg(2+).

The protein belongs to the D-alanine--D-alanine ligase family. The cofactor is Mg(2+). Requires Mn(2+) as cofactor.

Its subcellular location is the cytoplasm. The enzyme catalyses 2 D-alanine + ATP = D-alanyl-D-alanine + ADP + phosphate + H(+). It functions in the pathway cell wall biogenesis; peptidoglycan biosynthesis. Cell wall formation. This Shewanella halifaxensis (strain HAW-EB4) protein is D-alanine--D-alanine ligase.